A 1047-amino-acid polypeptide reads, in one-letter code: Atrial natriuretic peptide receptor 2 (1047 aa).

A signal peptide spans 1 to 16; that stretch reads MALPSLLLVVAALAGG. Residues 17–458 are Extracellular-facing; that stretch reads VRPPGARNLT…DKTPLSTLAI (442 aa). N-linked (GlcNAc...) asparagine glycans are attached at residues Asn-24 and Asn-35. Cys-75 and Cys-101 are oxidised to a cystine. Asn-161, Asn-195, Asn-244, Asn-277, and Asn-349 each carry an N-linked (GlcNAc...) asparagine glycan. A helical membrane pass occupies residues 459 to 478; that stretch reads VALGTGITFIMFGVSSFLIF. Residues 479-1047 lie on the Cytoplasmic side of the membrane; the sequence is RKLMLEKELA…GERKGPAGLL (569 aa). Ser-513 carries the post-translational modification Phosphoserine. The 274-residue stretch at 513–786 folds into the Protein kinase domain; sequence SRLTLSLRGS…PDFGQIKGFI (274 aa). A Phosphothreonine modification is found at Thr-516. Residues Ser-518, Ser-522, Ser-523, and Ser-526 each carry the phosphoserine modification. Thr-529 bears the Phosphothreonine mark. The region spanning 861–991 is the Guanylate cyclase domain; that stretch reads TIYFSDIVGF…DTVNTASRME (131 aa).

This sequence belongs to the adenylyl cyclase class-4/guanylyl cyclase family. Phosphorylated. Phosphorylation of the protein kinase-like domain is required for full activation by CNP. In terms of processing, glycosylated.

It localises to the cell membrane. It catalyses the reaction GTP = 3',5'-cyclic GMP + diphosphate. Receptor for the C-type natriuretic peptide NPPC/CNP hormone. Has guanylate cyclase activity upon binding of its ligand. May play a role in the regulation of skeletal growth. The polypeptide is Atrial natriuretic peptide receptor 2 (NPR2) (Bos taurus (Bovine)).